We begin with the raw amino-acid sequence, 329 residues long: MTNRKDDHIKYALKYQSPYNAFDDIELIHHSLPSYDLSDIDLSTHFAGQDFDFPFYINAMTGGSQKGKAVNEKLAKVAAATGIVMVTGSYSAALKNPNDDSYRLHEVADNLKLATNIGLDKPVALGQQTVQEMQPLFLQVHVNVMQELLMPEGERVFHTWKKHLAEYASQIPVPVILKEVGFGMDVNSIKLAHDLGIQTFDISGRGGTSFAYIENQRGGDRSYLNDWGQTTVQCLLNAQGLMDQVEILASGGVRHPLDMIKCFVLGARAVGLSRTVLELVEKYPTERVIAIVNGWKEELKIIMCALDCKTIKELKGVDYLLYGRLQQVN.

4 to 5 (RK) provides a ligand contact to substrate. FMN-binding positions include 59–61 (AMT), Ser-89, and Asn-116. Gln-146 provides a ligand contact to substrate. Glu-147 contributes to the Mg(2+) binding site. Residues Lys-178, Ser-203, Thr-208, 252–254 (GVR), and 273–274 (SR) each bind FMN.

The protein belongs to the IPP isomerase type 2 family. In terms of assembly, homooctamer. Dimer of tetramers. FMN serves as cofactor. NADPH is required as a cofactor. It depends on Mg(2+) as a cofactor.

The protein resides in the cytoplasm. It catalyses the reaction isopentenyl diphosphate = dimethylallyl diphosphate. Its function is as follows. Involved in the biosynthesis of isoprenoids. Catalyzes the 1,3-allylic rearrangement of the homoallylic substrate isopentenyl (IPP) to its allylic isomer, dimethylallyl diphosphate (DMAPP). The protein is Isopentenyl-diphosphate delta-isomerase of Streptococcus pyogenes serotype M28 (strain MGAS6180).